Reading from the N-terminus, the 315-residue chain is Methionyl-tRNA formyltransferase (315 aa).

112–115 (SLLP) serves as a coordination point for (6S)-5,6,7,8-tetrahydrofolate.

This sequence belongs to the Fmt family.

It catalyses the reaction L-methionyl-tRNA(fMet) + (6R)-10-formyltetrahydrofolate = N-formyl-L-methionyl-tRNA(fMet) + (6S)-5,6,7,8-tetrahydrofolate + H(+). Functionally, attaches a formyl group to the free amino group of methionyl-tRNA(fMet). The formyl group appears to play a dual role in the initiator identity of N-formylmethionyl-tRNA by promoting its recognition by IF2 and preventing the misappropriation of this tRNA by the elongation apparatus. This chain is Methionyl-tRNA formyltransferase, found in Leptospira borgpetersenii serovar Hardjo-bovis (strain JB197).